A 374-amino-acid polypeptide reads, in one-letter code: ATPase ASNA1 homolog (374 aa).

Lys-44–Thr-51 is an ATP binding site. The active site involves Asp-73. Positions 244 and 271 each coordinate ATP.

This sequence belongs to the arsA ATPase family. As to quaternary structure, homodimer.

It localises to the cytoplasm. Its subcellular location is the endoplasmic reticulum. Functionally, ATPase required for the post-translational delivery of tail-anchored (TA) proteins to the endoplasmic reticulum. Recognizes and selectively binds the transmembrane domain of TA proteins in the cytosol. This complex then targets to the endoplasmic reticulum by membrane-bound receptors, where the tail-anchored protein is released for insertion. This process is regulated by ATP binding and hydrolysis. ATP binding drives the homodimer towards the closed dimer state, facilitating recognition of newly synthesized TA membrane proteins. ATP hydrolysis is required for insertion. Subsequently, the homodimer reverts towards the open dimer state, lowering its affinity for the membrane-bound receptor, and returning it to the cytosol to initiate a new round of targeting. This Plasmodium vivax (strain Salvador I) protein is ATPase ASNA1 homolog.